The chain runs to 391 residues: MSIVRMTDLALSGKRVLIRQDLNVPIDQGRITSEQRIIASLPTIRVALERGAAVMVTSHLGRPKEGVWSEEDSLAPVAKRLSQLLGIEVPLRRDWVDGVQVAPGQLVLLENCRMNVGEAENDEALARKYAALCDVFVMDAFGTAHRAQASTHGVICCAAIAAGGPLLMAELDALSRGLKHPVKPLLAIVGGSKVSTKLELLSNLVNNVEQLITGGGIANTFLAAAGYPIGKSLYEADLIETAREIITVAKARGAEIPLPTDVVVAKQFLPGVTATVKTVDAIVADDLILDIGPQTARHYAALIETAATVVWNGPVGVFEFDAFSKGTEVLARAVAASSAFSIAGGGDTLAAIDKYGVADQISYISTGGGAFLEFLEGKTLPAVAALQARSG.

Residues 21–23 (DLN), arginine 36, 59–62 (HLGR), arginine 113, and arginine 146 each bind substrate. Residues lysine 197, glutamate 319, and 345 to 348 (GGDT) contribute to the ATP site.

The protein belongs to the phosphoglycerate kinase family. In terms of assembly, monomer.

It is found in the cytoplasm. The enzyme catalyses (2R)-3-phosphoglycerate + ATP = (2R)-3-phospho-glyceroyl phosphate + ADP. It participates in carbohydrate degradation; glycolysis; pyruvate from D-glyceraldehyde 3-phosphate: step 2/5. This Xylella fastidiosa (strain Temecula1 / ATCC 700964) protein is Phosphoglycerate kinase.